The sequence spans 461 residues: MLSLYYAINYKNRKMVERLLREGVHPDSTIKGFYRPLVKSILLRDVDLVSILLQNGANPNNINDETVSPLAIAIKVNSPTIVSLLLDYNADTSLFPLYVSFPIIKVLVYHGIDVNVIDRESRSFLHYAAKNDDVDTVISLILHGANVNVQDSKGLSPLHHAVSKKTTLTAKILLENGARVNIRDSLGRLPLHLGANTYEMVKLLIDYGSPIDIKDVNGSTPLHYAIWKSSLDTIRLLVNVSTINALDNNCNSPLHYIILSETEILVELLLRGADITIKDICGNTPLDILCKLRIKKLDNIKAIISNAFLMREVVPDLLKLCGFESNRKIISNISDLKQHEVSCIKEIHLMKEHSFRKNGPTILDVCTDKVHFLHRLVNARDNVQYKDFPIYCKYIKFRIEKAIYKKTIIEKTILLLDDILIKHEYTSWHDLPYELKHYIIEYINIEFIKSLLEHTNLKNKE.

ANK repeat units follow at residues 1–28 (MLSLYYAINYKNRKMVERLLREGVHPDS), 31–61 (KGFYRPLVKSILLRDVDLVSILLQNGANPNN), 65–94 (ETVSPLAIAIKVNSPTIVSLLLDYNADTSL), 96–116 (PLYVSFPIIKVLVYHGIDVNV), 120–149 (ESRSFLHYAAKNDDVDTVISLILHGANVNV), 153–182 (KGLSPLHHAVSKKTTLTAKILLENGARVNI), 186–213 (LGRLPLHLGANTYEMVKLLIDYGSPIDI), 217–248 (NGSTPLHYAIWKSSLDTIRLLVNVSTINALDN), 250–277 (CNSPLHYIILSETEILVELLLRGADITI), 281–312 (CGNTPLDILCKLRIKKLDNIKAIISNAFLMRE), 358–385 (NGPTILDVCTDKVHFLHRLVNARDNVQY), and 431–460 (LPYELKHYIIEYINIEFIKSLLEHTNLKNK).

The chain is Putative ankyrin repeat protein FPV218 from Fowlpox virus (strain NVSL) (FPV).